The chain runs to 243 residues: Proteasome subunit beta (243 aa).

Positions 1-16 (MRAPQHNSDFSRTVNQ) are enriched in polar residues. A disordered region spans residues 1 to 29 (MRAPQHNSDFSRTVNQLADDPNPYEPEVG). The propeptide at 1–48 (MRAPQHNSDFSRTVNQLADDPNPYEPEVGSMPKNEFSRADLDNVNKTG) is removed in mature form; by autocatalysis. Residue threonine 49 is the Nucleophile of the active site.

The protein belongs to the peptidase T1B family. As to quaternary structure, the 20S proteasome core is composed of 14 alpha and 14 beta subunits that assemble into four stacked heptameric rings, resulting in a barrel-shaped structure. The two inner rings, each composed of seven catalytic beta subunits, are sandwiched by two outer rings, each composed of seven alpha subunits. The catalytic chamber with the active sites is on the inside of the barrel. Has a gated structure, the ends of the cylinder being occluded by the N-termini of the alpha-subunits. Is capped at one or both ends by the proteasome regulatory ATPase, PAN.

Its subcellular location is the cytoplasm. It catalyses the reaction Cleavage of peptide bonds with very broad specificity.. The formation of the proteasomal ATPase PAN-20S proteasome complex, via the docking of the C-termini of PAN into the intersubunit pockets in the alpha-rings, triggers opening of the gate for substrate entry. Interconversion between the open-gate and close-gate conformations leads to a dynamic regulation of the 20S proteasome proteolysis activity. Its function is as follows. Component of the proteasome core, a large protease complex with broad specificity involved in protein degradation. The sequence is that of Proteasome subunit beta from Natrialba magadii (strain ATCC 43099 / DSM 3394 / CCM 3739 / CIP 104546 / IAM 13178 / JCM 8861 / NBRC 102185 / NCIMB 2190 / MS3) (Natronobacterium magadii).